A 262-amino-acid chain; its full sequence is Apolipoprotein A-I (262 aa).

The signal sequence occupies residues 1–18; it reads MKAVVLTLAVLFLTGSQA. Repeat copies occupy residues 67-88 and 89-110. Residues 67-262 are 10 X approximate tandem repeats; sequence LKLLDNWDTL…DEASKKLNAQ (196 aa). Methionine sulfoxide is present on Met-109. A 3; half-length repeat occupies 111 to 121; it reads KDLEEVKQKVQ. Repeat copies occupy residues 122–142, 144–165, 166–184, 185–206, and 207–227. Residues 228 to 238 form a 9; half-length repeat; the sequence is PALEDLRQGLM. At Met-238 the chain carries Methionine sulfoxide. The stretch at 239 to 262 is repeat 10; it reads PVLESLKVSILAAIDEASKKLNAQ.

The protein belongs to the apolipoprotein A1/A4/E family. In terms of assembly, homodimer. Interacts with APOA1BP and CLU. Component of a sperm activating protein complex (SPAP), consisting of APOA1, an immunoglobulin heavy chain, an immunoglobulin light chain and albumin. Interacts with NDRG1. Interacts with SCGB3A2. Interacts with NAXE and YJEFN3. In terms of processing, glycosylated. Post-translationally, palmitoylated. Phosphorylation sites are present in the extracellular medium. In terms of tissue distribution, major protein of plasma HDL, also found in chylomicrons.

It localises to the secreted. Participates in the reverse transport of cholesterol from tissues to the liver for excretion by promoting cholesterol efflux from tissues and by acting as a cofactor for the lecithin cholesterol acyltransferase (LCAT). As part of the SPAP complex, activates spermatozoa motility. The polypeptide is Apolipoprotein A-I (APOA1) (Pantholops hodgsonii (Chiru)).